Consider the following 257-residue polypeptide: Fructose-2,6-bisphosphatase TIGAR B (257 aa).

Residue His-11 is the Tele-phosphohistidine intermediate of the active site. Glu-89 functions as the Proton donor/acceptor in the catalytic mechanism.

The protein belongs to the phosphoglycerate mutase family.

The protein resides in the cytoplasm. It localises to the nucleus. The protein localises to the mitochondrion. The catalysed reaction is beta-D-fructose 2,6-bisphosphate + H2O = beta-D-fructose 6-phosphate + phosphate. Its function is as follows. Fructose-bisphosphatase hydrolyzing fructose-2,6-bisphosphate as well as fructose-1,6-bisphosphate. Acts as a negative regulator of glycolysis by lowering intracellular levels of fructose-2,6-bisphosphate in a p53/TP53-dependent manner, resulting in the pentose phosphate pathway (PPP) activation and NADPH production. Contributes to the generation of reduced glutathione to cause a decrease in intracellular reactive oxygen species (ROS) content, correlating with its ability to protect cells from oxidative or metabolic stress-induced cell death. May play a role in mitophagy inhibition. The protein is Fructose-2,6-bisphosphatase TIGAR B of Danio rerio (Zebrafish).